Consider the following 351-residue polypeptide: Uroporphyrinogen decarboxylase (351 aa).

Substrate-binding positions include R27 to R31, D77, Y154, T209, and H327.

The protein belongs to the uroporphyrinogen decarboxylase family. Homodimer.

Its subcellular location is the cytoplasm. The catalysed reaction is uroporphyrinogen III + 4 H(+) = coproporphyrinogen III + 4 CO2. Its pathway is porphyrin-containing compound metabolism; protoporphyrin-IX biosynthesis; coproporphyrinogen-III from 5-aminolevulinate: step 4/4. In terms of biological role, catalyzes the decarboxylation of four acetate groups of uroporphyrinogen-III to yield coproporphyrinogen-III. In Thioalkalivibrio sulfidiphilus (strain HL-EbGR7), this protein is Uroporphyrinogen decarboxylase.